The following is a 334-amino-acid chain: Holliday junction branch migration complex subunit RuvB (334 aa).

The tract at residues 4–186 (ADRLIAPENP…FGITQRLEYY (183 aa)) is large ATPase domain (RuvB-L). ATP-binding positions include Ile25, Arg26, Gly67, Lys70, Thr71, Thr72, 133-135 (EDY), Arg176, Tyr186, and Arg223. Thr71 provides a ligand contact to Mg(2+). The segment at 187-257 (KVKDLQDIVQ…TADKALNMLD (71 aa)) is small ATPAse domain (RuvB-S). Residues 260–334 (AEGFDYMDRK…RAYLHFGIEK (75 aa)) form a head domain (RuvB-H) region. Residues Arg315 and Arg320 each coordinate DNA.

The protein belongs to the RuvB family. Homohexamer. Forms an RuvA(8)-RuvB(12)-Holliday junction (HJ) complex. HJ DNA is sandwiched between 2 RuvA tetramers; dsDNA enters through RuvA and exits via RuvB. An RuvB hexamer assembles on each DNA strand where it exits the tetramer. Each RuvB hexamer is contacted by two RuvA subunits (via domain III) on 2 adjacent RuvB subunits; this complex drives branch migration. In the full resolvosome a probable DNA-RuvA(4)-RuvB(12)-RuvC(2) complex forms which resolves the HJ.

It is found in the cytoplasm. It catalyses the reaction ATP + H2O = ADP + phosphate + H(+). In terms of biological role, the RuvA-RuvB-RuvC complex processes Holliday junction (HJ) DNA during genetic recombination and DNA repair, while the RuvA-RuvB complex plays an important role in the rescue of blocked DNA replication forks via replication fork reversal (RFR). RuvA specifically binds to HJ cruciform DNA, conferring on it an open structure. The RuvB hexamer acts as an ATP-dependent pump, pulling dsDNA into and through the RuvAB complex. RuvB forms 2 homohexamers on either side of HJ DNA bound by 1 or 2 RuvA tetramers; 4 subunits per hexamer contact DNA at a time. Coordinated motions by a converter formed by DNA-disengaged RuvB subunits stimulates ATP hydrolysis and nucleotide exchange. Immobilization of the converter enables RuvB to convert the ATP-contained energy into a lever motion, pulling 2 nucleotides of DNA out of the RuvA tetramer per ATP hydrolyzed, thus driving DNA branch migration. The RuvB motors rotate together with the DNA substrate, which together with the progressing nucleotide cycle form the mechanistic basis for DNA recombination by continuous HJ branch migration. Branch migration allows RuvC to scan DNA until it finds its consensus sequence, where it cleaves and resolves cruciform DNA. This Vibrio campbellii (strain ATCC BAA-1116) protein is Holliday junction branch migration complex subunit RuvB.